Consider the following 445-residue polypeptide: UPF0210 protein SMU_73 (445 aa).

Belongs to the UPF0210 family. Homodimer.

This is UPF0210 protein SMU_73 from Streptococcus mutans serotype c (strain ATCC 700610 / UA159).